The sequence spans 528 residues: Dihydromonacolin L monooxygenase LovA (528 aa).

At 1–23 (MTVDALTQPHHLLSLAWNDTQQH) the chain is on the cytoplasmic side. The chain crosses the membrane as a helical; Signal-anchor for type II membrane protein span at residues 24–44 (GSWFAPLVTTSAGLLCLLLYL). Residues 45–528 (CSSGRRSDLP…DEDIRLPGSL (484 aa)) lie on the Lumenal side of the membrane. A heme-binding site is contributed by C465.

Belongs to the cytochrome P450 family. Heme is required as a cofactor.

It localises to the membrane. Its subcellular location is the endoplasmic reticulum membrane. It carries out the reaction dihydromonacolin L carboxylate + reduced [NADPH--hemoprotein reductase] + O2 = monacolin L carboxylate + oxidized [NADPH--hemoprotein reductase] + 2 H2O + H(+). The enzyme catalyses monacolin L carboxylate + reduced [NADPH--hemoprotein reductase] + O2 = monacolin J carboxylate + oxidized [NADPH--hemoprotein reductase] + H2O + H(+). It functions in the pathway polyketide biosynthesis; lovastatin biosynthesis. Functionally, dihydromonacolin L monooxygenase; part of the gene cluster that mediates the biosynthesis of lovastatin (also known as mevinolin, mevacor or monacolin K), a hypolipidemic inhibitor of (3S)-hydroxymethylglutaryl-coenzyme A (HMG-CoA) reductase (HMGR). The first step in the biosynthesis of lovastatin is the production of dihydromonacolin L acid by the lovastatin nonaketide synthase lovB and the trans-acting enoyl reductase lovC via condensation of one acetyl-CoA unit and 8 malonyl-CoA units. Dihydromonacolin L acid is released from lovB by the thioesterase lovG. Next, dihydromonacolin L acid is oxidized by the dihydromonacolin L monooxygenase lovA twice to form monacolin J acid. The 2-methylbutyrate moiety of lovastatin is synthesized by the lovastatin diketide synthase lovF via condensation of one acetyl-CoA unit and one malonyl-CoA unit. Finally, the covalent attachment of this moiety to monacolin J acid is catalyzed by the transesterase lovD to yield lovastatin. LovD has broad substrate specificity and can also convert monacolin J to simvastatin using alpha-dimethylbutanoyl-S-methyl-3-mercaptopropionate (DMB-S-MMP) as the thioester acyl donor, and can also catalyze the reverse reaction and function as hydrolase in vitro. LovD has much higher activity with LovF-bound 2-methylbutanoate than with free diketide substrates. The chain is Dihydromonacolin L monooxygenase LovA from Aspergillus terreus.